The chain runs to 1184 residues: Calcium-activated potassium channel subunit alpha-1a (1184 aa).

The Extracellular segment spans residues 1 to 39 (MSNNINFNKNPDSSVSISKMDVIIPFTPDVPCDNNGQRM). Residues 40–60 (WWAFLASSMVTFFGGLFIILL) traverse the membrane as a helical segment. Residues 61–132 (WRTLKYLWTV…MISAQTLTGR (72 aa)) are Cytoplasmic-facing. Residues Cys-71, Cys-72, and Cys-74 are each lipidated (S-palmitoyl cysteine). Residues 133–153 (VLVVLVFALSIGALGIYFIDS) traverse the membrane as a helical segment. The Extracellular portion of the chain corresponds to 154–168 (SDPIESCQNFYKDFT). Residues 169-189 (LQIDMAFNVFFLLYFGLRFIA) traverse the membrane as a helical segment. Over 190–193 (ANDK) the chain is Cytoplasmic. A helical membrane pass occupies residues 194–214 (LWFWLEVNSVVDFFTVPPVFV). The Extracellular segment spans residues 215–254 (SVYLNRSWLGLRFLRALRLIQFSEILQFLNILKTSNSIKL). A helical transmembrane segment spans residues 255–275 (VNLCSIFISTWLTAAGFIHLV). Over 276-289 (ENSGDPWENFQNSQ) the chain is Cytoplasmic. A helical membrane pass occupies residues 290–310 (PLSYWECVYLLMVTMSTVGYG). Topologically, residues 311-321 (DVYARTTLGRL) are extracellular. A helical transmembrane segment spans residues 322–342 (FMVFFILGGLAMFASYVPEII). Residues 343–1184 (ELIGNRKKYG…PPIREVEDEC (842 aa)) are Cytoplasmic-facing. The RCK N-terminal 1 domain occupies 361–503 (RKHIVVCGHI…WNWKEGDDAI (143 aa)). Residues Glu-393, Gln-416, and Glu-418 each contribute to the Mg(2+) site. Asn-468 lines the Ca(2+) pocket. The disordered stretch occupies residues 655–677 (EHPSTLSPKKKQRNGGMRNSPNC). The residue at position 659 (Thr-659) is a Phosphothreonine. Phosphoserine is present on residues Ser-661, Ser-674, and Ser-678. The RCK N-terminal 2 domain occupies 735-879 (SGHVVVCIFG…MDRSSPDNSP (145 aa)). Phosphothreonine is present on Thr-866. Ser-874 and Ser-878 each carry phosphoserine. Residues Gln-908, Asp-911, Asp-914, and Asp-916 each coordinate Ca(2+). A Calcium bowl motif is present at residues 908–916 (QFLDQDDDD). Positions 1082-1143 (RASLSHSSHS…PEKRWFTDEA (62 aa)) are disordered. Over residues 1084–1104 (SLSHSSHSSHSSSKKSSSVHS) the composition is skewed to low complexity. Positions 1116-1125 (KAREARDKQN) are enriched in basic and acidic residues.

It belongs to the potassium channel family. Calcium-activated (TC 1.A.1.3) subfamily. KCa1.1/KCNMA1 sub-subfamily. As to quaternary structure, homotetramer; which constitutes the calcium-activated potassium channel. Phosphorylated. In terms of processing, palmitoylated.

It is found in the cell membrane. It catalyses the reaction K(+)(in) = K(+)(out). Its function is as follows. Potassium channel activated by both membrane depolarization or increase in cytosolic Ca(2+) that mediates export of K(+). It is also activated by the concentration of cytosolic Mg(2+). Its activation dampens the excitatory events that elevate the cytosolic Ca(2+) concentration and/or depolarize the cell membrane. It therefore contributes to repolarization of the membrane potential. Involved in determining peripheral auditory sensitivity. This chain is Calcium-activated potassium channel subunit alpha-1a, found in Danio rerio (Zebrafish).